Here is a 1353-residue protein sequence, read N- to C-terminus: Patatin-like phospholipase domain-containing protein ZK370.4 (1353 aa).

The chain crosses the membrane as a helical span at residues 12–32 (IFLVTFIYNHVLLILFTVCII). Positions 49–64 (TPSSASSSATPSSRNS) are enriched in low complexity. Disordered stretches follow at residues 49 to 188 (TPSS…STAF) and 199 to 218 (SRSY…VRPP). Positions 91 to 123 (SPKSGTPTNTQTIEPPTSLNLNMVNSASGSNLS) are enriched in polar residues. 2 stretches are compositionally biased toward basic residues: residues 126–138 (RRMR…KKLY) and 170–184 (PRRR…RRRQ). A nucleoside 3',5'-cyclic phosphate is bound by residues 245–372 (LKML…VITR), 444–581 (FGLV…VLRR), and 570–692 (IYLP…LGQY). The 167-residue stretch at 942–1108 (LVLGGGGARG…VNNVPADVMR (167 aa)) folds into the PNPLA domain. Residues 946–951 (GGGARG) carry the GXGXXG motif. The short motif at 973–977 (GTSIG) is the GXSXG element. The active-site Nucleophile is the Ser975. The Proton acceptor role is filled by Asp1095. Residues 1095–1097 (DGG) carry the DGA/G motif. Disordered regions lie at residues 1230–1249 (EKET…PDVS), 1274–1293 (SMSL…DHFL), and 1305–1353 (YEEE…PPSS). The span at 1328-1337 (GPPSSSSSGG) shows a compositional bias: low complexity.

The protein belongs to the NTE family.

The protein resides in the membrane. In Caenorhabditis elegans, this protein is Patatin-like phospholipase domain-containing protein ZK370.4.